A 289-amino-acid chain; its full sequence is MRKLTSFVCGTGAGLAAYYLQRLRDPQTVVQNSWTHSDKPVDPWALWDTNWDCREPRALVRPLRNSQPEEENRYNAELEKAKAKKARHIILVRHGEYLDVGDSDDTHHLTERGRKQAEFTGKRLCELGIKWDKVVASTMVRAQETSDIILKQIDFEKEKVVNCAFLREGAPIPPQPPVGHWKPEASQFLRDGSRIEAGFRRYFHRAYPDQEKESYTLIVGHGNVIRYFVCRALQFPAEGWLRININHASITWLTISPSGNVSIKYLGDSGFMPAELLTNRIPRDVKNVV.

A helical membrane pass occupies residues 7–23; that stretch reads FVCGTGAGLAAYYLQRL.

The protein belongs to the phosphoglycerate mutase family. BPG-dependent PGAM subfamily. In terms of assembly, interacts with Pk92B/ASK1.

The protein localises to the mitochondrion outer membrane. It catalyses the reaction O-phospho-L-seryl-[protein] + H2O = L-seryl-[protein] + phosphate. The catalysed reaction is O-phospho-L-threonyl-[protein] + H2O = L-threonyl-[protein] + phosphate. Its function is as follows. Displays phosphatase activity for serine/threonine residues, and dephosphorylates and activates Pk92B kinase. Has apparently no phosphoglycerate mutase activity. This is Serine/threonine-protein phosphatase Pgam5, mitochondrial (Pgam5) from Drosophila melanogaster (Fruit fly).